The sequence spans 592 residues: Aspartate--tRNA ligase (592 aa).

An L-aspartate-binding site is contributed by E177. An aspartate region spans residues 201–204 (QIFK). R223 is a binding site for L-aspartate. Residues 223–225 (RDE) and Q232 contribute to the ATP site. H451 contacts L-aspartate. ATP is bound at residue E485. R492 contacts L-aspartate. 537–540 (GLDR) lines the ATP pocket.

It belongs to the class-II aminoacyl-tRNA synthetase family. Type 1 subfamily. Homodimer.

It localises to the cytoplasm. The catalysed reaction is tRNA(Asp) + L-aspartate + ATP = L-aspartyl-tRNA(Asp) + AMP + diphosphate. In terms of biological role, catalyzes the attachment of L-aspartate to tRNA(Asp) in a two-step reaction: L-aspartate is first activated by ATP to form Asp-AMP and then transferred to the acceptor end of tRNA(Asp). The protein is Aspartate--tRNA ligase of Bacillus licheniformis (strain ATCC 14580 / DSM 13 / JCM 2505 / CCUG 7422 / NBRC 12200 / NCIMB 9375 / NCTC 10341 / NRRL NRS-1264 / Gibson 46).